The chain runs to 154 residues: Crossover junction endodeoxyribonuclease RuvC (154 aa).

Residues D7, E67, and D139 contribute to the active site. Mg(2+) is bound by residues D7, E67, and D139.

The protein belongs to the RuvC family. As to quaternary structure, homodimer which binds Holliday junction (HJ) DNA. The HJ becomes 2-fold symmetrical on binding to RuvC with unstacked arms; it has a different conformation from HJ DNA in complex with RuvA. In the full resolvosome a probable DNA-RuvA(4)-RuvB(12)-RuvC(2) complex forms which resolves the HJ. The cofactor is Mg(2+).

The protein resides in the cytoplasm. It catalyses the reaction Endonucleolytic cleavage at a junction such as a reciprocal single-stranded crossover between two homologous DNA duplexes (Holliday junction).. In terms of biological role, the RuvA-RuvB-RuvC complex processes Holliday junction (HJ) DNA during genetic recombination and DNA repair. Endonuclease that resolves HJ intermediates. Cleaves cruciform DNA by making single-stranded nicks across the HJ at symmetrical positions within the homologous arms, yielding a 5'-phosphate and a 3'-hydroxyl group; requires a central core of homology in the junction. The consensus cleavage sequence is 5'-(A/T)TT(C/G)-3'. Cleavage occurs on the 3'-side of the TT dinucleotide at the point of strand exchange. HJ branch migration catalyzed by RuvA-RuvB allows RuvC to scan DNA until it finds its consensus sequence, where it cleaves and resolves the cruciform DNA. This Prochlorococcus marinus (strain NATL1A) protein is Crossover junction endodeoxyribonuclease RuvC.